We begin with the raw amino-acid sequence, 317 residues long: MREVLVVSESVELAEEYYLSFNKFSSGSTSLLGQVTKASFFSSLASSGTKSLNTKSFGLKSLSLKSLNTKSSGLKSLNTKSSGLKSLGLKNEFDYLTFEQVKSSGLEDERYELILVVCDDTDDFYGEKGLANLTLFHNSLLPNGKFVLAVPLNSPHEEEMRKELMYSGLVDVASCAYYLTKFITGVRPNWKAKGDRKSSSIHAAPIDGYISKAPDYESCSTKPRACANCTCGRAERENLNSTDSNANSTDFNANSTDFNGVDLTTNSKDVSGVDLVVDVDAPTSSCGNCYLGDAFRCDSCPYKGLPAFKPGEKVLLE.

The tract at residues 1–192 (MREVLVVSES…ITGVRPNWKA (192 aa)) is N-terminal SAM-like domain. Positions 193 to 216 (KGDRKSSSIHAAPIDGYISKAPDY) are linker. Residues Cys219, Cys226, Cys229, and Cys231 each contribute to the [2Fe-2S] cluster site. Residues 219-231 (CSTKPRACANCTC) form a fe-S binding site A region. [4Fe-4S] cluster is bound by residues Cys286, Cys289, Cys297, and Cys300. 2 short sequence motifs (cx2C motif) span residues 286-289 (CGNC) and 297-300 (CDSC). Residues 286–300 (CGNCYLGDAFRCDSC) form a fe-S binding site B region.

It belongs to the anamorsin family. Monomer. [2Fe-2S] cluster serves as cofactor. [4Fe-4S] cluster is required as a cofactor.

It is found in the cytoplasm. It localises to the mitochondrion intermembrane space. Its function is as follows. Component of the cytosolic iron-sulfur (Fe-S) protein assembly (CIA) machinery. Required for the maturation of extramitochondrial Fe-S proteins. Part of an electron transfer chain functioning in an early step of cytosolic Fe-S biogenesis, facilitating the de novo assembly of a [4Fe-4S] cluster on the cytosolic Fe-S scaffold complex. Electrons are transferred from NADPH via a FAD- and FMN-containing diflavin oxidoreductase. Together with the diflavin oxidoreductase, also required for the assembly of the diferric tyrosyl radical cofactor of ribonucleotide reductase (RNR), probably by providing electrons for reduction during radical cofactor maturation in the catalytic small subunit. The polypeptide is Anamorsin homolog (Theileria parva (East coast fever infection agent)).